The following is a 492-amino-acid chain: Glutamyl-tRNA(Gln) amidotransferase subunit A (492 aa).

Active-site charge relay system residues include Lys-79 and Ser-154. Residue Ser-178 is the Acyl-ester intermediate of the active site.

The protein belongs to the amidase family. GatA subfamily. As to quaternary structure, heterotrimer of A, B and C subunits.

The enzyme catalyses L-glutamyl-tRNA(Gln) + L-glutamine + ATP + H2O = L-glutaminyl-tRNA(Gln) + L-glutamate + ADP + phosphate + H(+). Allows the formation of correctly charged Gln-tRNA(Gln) through the transamidation of misacylated Glu-tRNA(Gln) in organisms which lack glutaminyl-tRNA synthetase. The reaction takes place in the presence of glutamine and ATP through an activated gamma-phospho-Glu-tRNA(Gln). The polypeptide is Glutamyl-tRNA(Gln) amidotransferase subunit A (Desulforudis audaxviator (strain MP104C)).